A 44-amino-acid polypeptide reads, in one-letter code: Conotoxin Fi11.11 (44 aa).

4 cysteine pairs are disulfide-bonded: Cys1–Cys15, Cys8–Cys20, Cys14–Cys24, and Cys19–Cys28. Asparagine amide is present on Asn30. Residues 35–44 (QVPLKSFGQR) constitute a propeptide that is removed on maturation.

The protein belongs to the conotoxin I2 superfamily. As to expression, expressed by the venom duct.

Its subcellular location is the secreted. This chain is Conotoxin Fi11.11, found in Conus figulinus (Fig cone).